We begin with the raw amino-acid sequence, 167 residues long: 2-amino-4-hydroxy-6-hydroxymethyldihydropteridine pyrophosphokinase (167 aa).

It belongs to the HPPK family.

It catalyses the reaction 6-hydroxymethyl-7,8-dihydropterin + ATP = (7,8-dihydropterin-6-yl)methyl diphosphate + AMP + H(+). It functions in the pathway cofactor biosynthesis; tetrahydrofolate biosynthesis; 2-amino-4-hydroxy-6-hydroxymethyl-7,8-dihydropteridine diphosphate from 7,8-dihydroneopterin triphosphate: step 4/4. In terms of biological role, catalyzes the transfer of pyrophosphate from adenosine triphosphate (ATP) to 6-hydroxymethyl-7,8-dihydropterin, an enzymatic step in folate biosynthesis pathway. The polypeptide is 2-amino-4-hydroxy-6-hydroxymethyldihydropteridine pyrophosphokinase (folK) (Bacillus subtilis (strain 168)).